The chain runs to 559 residues: MILKSSIDRLLQTIDIVEVISSYVNLRKSGSSYMACCPFHEERSASFSVNQIKGFYHCFGCGASGDSIKFVMAFEKLSFVEALEKLAHRFNIVLEYDKGVYYDHKEDYHLLEMVSSLYQEELFNAPFFLNYLQKRGLSLESIKAFKLGLCTNRIDYGIENKGLNKDKLIELGVLGKSDNDQKTYLRFLDRIMFPIYSPSAQVVGFGGRTLKEKAAKYINSPQSKLFDKSSLLYGYHLAKEHIYKQKQVIVTEGYLDVILLHQAGFKNAIATLGTALTPSHLPLLKKGDPEILLSYDGDKAGRNAAYKASLMLAKEQRRGGVILFENNLDPADMIANGQIETLKNWLSHPMAFIEFVLRRMADSYLLDDPLEKDKALKEMLGFLKNFSLLLQSEYKPLIATLLQAPLHVLGIRERVSFQPFYPKTEKPNRPQRFAHVSSAPSLEFLEKLVIRYLLEDRSLLDLAVGYIHSGVFLHKKQEFDALCQEKLDDPKLVALLLDANLPLKKGGFEKELRLLILRYFERQLKEIPKSSLPFSEKMICLKKARQAIMKLKQGELVAI.

The segment at 37-61 (CPFHEERSASFSVNQIKGFYHCFGC) adopts a CHC2-type zinc-finger fold. The Toprim domain occupies 246–327 (KQVIVTEGYL…RGGVILFENN (82 aa)). Mg(2+)-binding residues include glutamate 252, aspartate 296, and aspartate 298.

This sequence belongs to the DnaG primase family. In terms of assembly, monomer. The C-terminal domain DnaB-binding domain exists as a dimer in solution. Interacts with DnaB via its C-terminal domain (residues 415-559 of DnaG); up to 3 DnaG fragments bind to a DnaB hexamer. Zn(2+) is required as a cofactor. Requires Mg(2+) as cofactor.

It catalyses the reaction ssDNA + n NTP = ssDNA/pppN(pN)n-1 hybrid + (n-1) diphosphate.. In terms of biological role, RNA polymerase that catalyzes the synthesis of short RNA molecules used as primers for DNA polymerase during DNA replication. Stimulates the 5'-3' DNA helicase activity of DnaB. This chain is DNA primase, found in Helicobacter pylori (strain ATCC 700392 / 26695) (Campylobacter pylori).